We begin with the raw amino-acid sequence, 1051 residues long: Kinesin-like protein KIN-4B (1051 aa).

The interval 1–21 (MESHSSLSSSSSSSPPSSLSS) is disordered. The region spanning 25–380 (CVKVAVNVRP…LKYANRARNI (356 aa)) is the Kinesin motor domain. 104–111 (GQTGSGKT) serves as a coordination point for ATP. Coiled-coil stretches lie at residues 414 to 448 (ATSS…RSKR) and 540 to 644 (RQHF…KMKQ). A compositionally biased stretch (low complexity) spans 916-925 (SSSYSGSSRS). 2 disordered regions span residues 916–946 (SSSY…SSTY) and 1029–1051 (MSKS…FQGA).

It belongs to the TRAFAC class myosin-kinesin ATPase superfamily. Kinesin family. KIN-4 subfamily. Homodimer.

Kinesin-like motor protein involved in the control of the oriented deposition of cellulose microfibrils. The sequence is that of Kinesin-like protein KIN-4B from Arabidopsis thaliana (Mouse-ear cress).